We begin with the raw amino-acid sequence, 155 residues long: Large ribosomal subunit protein uL11 (155 aa).

It belongs to the universal ribosomal protein uL11 family. As to quaternary structure, part of the ribosomal stalk of the 50S ribosomal subunit. Interacts with L10 and the large rRNA to form the base of the stalk. L10 forms an elongated spine to which L12 dimers bind in a sequential fashion forming a multimeric L10(L12)X complex. Post-translationally, one or more lysine residues are methylated.

Functionally, forms part of the ribosomal stalk which helps the ribosome interact with GTP-bound translation factors. The protein is Large ribosomal subunit protein uL11 of Malacoplasma penetrans (strain HF-2) (Mycoplasma penetrans).